Consider the following 326-residue polypeptide: Pyruvate dehydrogenase E1 component subunit alpha (326 aa).

In terms of assembly, heterodimer of an alpha and a beta chain. Thiamine diphosphate serves as cofactor.

The catalysed reaction is N(6)-[(R)-lipoyl]-L-lysyl-[protein] + pyruvate + H(+) = N(6)-[(R)-S(8)-acetyldihydrolipoyl]-L-lysyl-[protein] + CO2. In terms of biological role, the pyruvate dehydrogenase complex catalyzes the overall conversion of pyruvate to acetyl-CoA and CO(2). It contains multiple copies of three enzymatic components: pyruvate dehydrogenase (E1), dihydrolipoamide acetyltransferase (E2) and lipoamide dehydrogenase (E3). This is Pyruvate dehydrogenase E1 component subunit alpha (pdhA) from Rickettsia conorii (strain ATCC VR-613 / Malish 7).